A 77-amino-acid chain; its full sequence is Large ribosomal subunit protein eL20 (77 aa).

Belongs to the eukaryotic ribosomal protein eL20 family. Part of the 50S ribosomal subunit. Binds 23S rRNA.

This chain is Large ribosomal subunit protein eL20, found in Pyrococcus horikoshii (strain ATCC 700860 / DSM 12428 / JCM 9974 / NBRC 100139 / OT-3).